Consider the following 337-residue polypeptide: Ribosomal RNA small subunit methyltransferase C (337 aa).

This sequence belongs to the methyltransferase superfamily. RsmC family. As to quaternary structure, monomer.

Its subcellular location is the cytoplasm. The catalysed reaction is guanosine(1207) in 16S rRNA + S-adenosyl-L-methionine = N(2)-methylguanosine(1207) in 16S rRNA + S-adenosyl-L-homocysteine + H(+). Its function is as follows. Specifically methylates the guanine in position 1207 of 16S rRNA in the 30S particle. This is Ribosomal RNA small subunit methyltransferase C from Acinetobacter baumannii (strain ATCC 17978 / DSM 105126 / CIP 53.77 / LMG 1025 / NCDC KC755 / 5377).